Consider the following 465-residue polypeptide: 23S rRNA (uracil(1939)-C(5))-methyltransferase RlmD (465 aa).

A disordered region spans residues 1–24 (MSEAVPLSTRRASSAGDAPGRAPV). The region spanning 16-80 (GDAPGRAPVL…PTYEQAQVVD (65 aa)) is the TRAM domain. The [4Fe-4S] cluster site is built by C93, C99, C102, and C181. S-adenosyl-L-methionine-binding residues include Q289, F318, N323, E339, N367, and D388. C421 (nucleophile) is an active-site residue.

It belongs to the class I-like SAM-binding methyltransferase superfamily. RNA M5U methyltransferase family. RlmD subfamily.

The enzyme catalyses uridine(1939) in 23S rRNA + S-adenosyl-L-methionine = 5-methyluridine(1939) in 23S rRNA + S-adenosyl-L-homocysteine + H(+). In terms of biological role, catalyzes the formation of 5-methyl-uridine at position 1939 (m5U1939) in 23S rRNA. The polypeptide is 23S rRNA (uracil(1939)-C(5))-methyltransferase RlmD (Burkholderia mallei (strain ATCC 23344)).